The primary structure comprises 86 residues: uncharacterized protein (86 aa).

A run of 3 helical transmembrane segments spans residues 4–24, 34–54, and 64–84; these read ILIIAEYTLLASLAVFSIAAV, MGLVGISGLNIAIATILILIN, and DIAYALVLLGPVGTIAFARVL.

This sequence to M.jannaschii MJ1223.

The protein resides in the cell membrane. This is an uncharacterized protein from Methanothermobacter thermautotrophicus (strain ATCC 29096 / DSM 1053 / JCM 10044 / NBRC 100330 / Delta H) (Methanobacterium thermoautotrophicum).